Reading from the N-terminus, the 198-residue chain is IMP cyclohydrolase (198 aa).

The protein belongs to the archaeal IMP cyclohydrolase family.

It catalyses the reaction IMP + H2O = 5-formamido-1-(5-phospho-D-ribosyl)imidazole-4-carboxamide. Its pathway is purine metabolism; IMP biosynthesis via de novo pathway; IMP from 5-formamido-1-(5-phospho-D-ribosyl)imidazole-4-carboxamide: step 1/1. In terms of biological role, catalyzes the cyclization of 5-formylamidoimidazole-4-carboxamide ribonucleotide to IMP. In Thermococcus kodakarensis (strain ATCC BAA-918 / JCM 12380 / KOD1) (Pyrococcus kodakaraensis (strain KOD1)), this protein is IMP cyclohydrolase.